We begin with the raw amino-acid sequence, 477 residues long: Bifunctional protein HldE (477 aa).

The tract at residues 1–318 is ribokinase; the sequence is MKVTLPEFER…ENAVRGRADT (318 aa). Residue lysine 179 is modified to N6-acetyllysine. 195 to 198 is an ATP binding site; the sequence is NLSE. Aspartate 264 is a catalytic residue. A cytidylyltransferase region spans residues 344 to 477; that stretch reads MTNGVFDILH…IKKIQQDKKG (134 aa).

The protein in the N-terminal section; belongs to the carbohydrate kinase PfkB family. In the C-terminal section; belongs to the cytidylyltransferase family. In terms of assembly, homodimer.

It carries out the reaction D-glycero-beta-D-manno-heptose 7-phosphate + ATP = D-glycero-beta-D-manno-heptose 1,7-bisphosphate + ADP + H(+). The enzyme catalyses D-glycero-beta-D-manno-heptose 1-phosphate + ATP + H(+) = ADP-D-glycero-beta-D-manno-heptose + diphosphate. It functions in the pathway nucleotide-sugar biosynthesis; ADP-L-glycero-beta-D-manno-heptose biosynthesis; ADP-L-glycero-beta-D-manno-heptose from D-glycero-beta-D-manno-heptose 7-phosphate: step 1/4. The protein operates within nucleotide-sugar biosynthesis; ADP-L-glycero-beta-D-manno-heptose biosynthesis; ADP-L-glycero-beta-D-manno-heptose from D-glycero-beta-D-manno-heptose 7-phosphate: step 3/4. Its function is as follows. Catalyzes the phosphorylation of D-glycero-D-manno-heptose 7-phosphate at the C-1 position to selectively form D-glycero-beta-D-manno-heptose-1,7-bisphosphate. In terms of biological role, catalyzes the ADP transfer from ATP to D-glycero-beta-D-manno-heptose 1-phosphate, yielding ADP-D-glycero-beta-D-manno-heptose. The chain is Bifunctional protein HldE from Shigella sonnei (strain Ss046).